The chain runs to 420 residues: Probable pectate lyase C (420 aa).

The N-terminal stretch at 1–20 is a signal peptide; sequence MKLSEPLLVSLAAFSQAVTA. Asn-49, Asn-165, and Asn-202 each carry an N-linked (GlcNAc...) asparagine glycan. Arg-205 is a catalytic residue. Residues 262-297 form the EF-hand domain; the sequence is NANFHGYVQNNYYDPDKDGQLDGFELGVSSSNYGGM. Ca(2+)-binding residues include Asp-275, Asp-277, Asp-279, Gln-281, and Glu-286. The disordered stretch occupies residues 358–396; it reads TMGGPGTLNGGTPAKDTDGDGIPDEAEKQLGTDPNTNDS. Residue Asn-394 is glycosylated (N-linked (GlcNAc...) asparagine).

Belongs to the polysaccharide lyase 1 family. Requires Ca(2+) as cofactor.

It is found in the secreted. It carries out the reaction Eliminative cleavage of (1-&gt;4)-alpha-D-galacturonan to give oligosaccharides with 4-deoxy-alpha-D-galact-4-enuronosyl groups at their non-reducing ends.. Functionally, pectinolytic enzyme consist of four classes of enzymes: pectin lyase, polygalacturonase, pectin methylesterase and rhamnogalacturonase. Among pectinolytic enzymes, pectin lyase is the most important in depolymerization of pectin, since it cleaves internal glycosidic bonds of highly methylated pectins. Favors pectate, the anion, over pectin, the methyl ester. This is Probable pectate lyase C (plyC) from Aspergillus fumigatus (strain ATCC MYA-4609 / CBS 101355 / FGSC A1100 / Af293) (Neosartorya fumigata).